Here is a 231-residue protein sequence, read N- to C-terminus: Ribosyldihydronicotinamide dehydrogenase [quinone] (231 aa).

FAD is bound by residues H12 and 18 to 21 (FNGS). S80 bears the Phosphoserine mark. 104–107 (LYWF) is a binding site for FAD. Position 127–129 (127–129 (FDI)) interacts with substrate. Residues 148 to 151 (TTGG) and Y156 contribute to the FAD site. Residues H174 and H178 each coordinate Zn(2+). Residue E194 participates in FAD binding. A Phosphoserine modification is found at S197. R201 serves as a coordination point for FAD. C223 lines the Zn(2+) pocket.

Belongs to the NAD(P)H dehydrogenase (quinone) family. As to quaternary structure, homodimer. The cofactor is Zn(2+). FAD is required as a cofactor.

It is found in the cytoplasm. It catalyses the reaction 1-(beta-D-ribofuranosyl)-1,4-dihydronicotinamide + a quinone + H(+) = beta-nicotinamide D-riboside + a quinol. Its activity is regulated as follows. Inhibited by melatonin, resveratrol and 5-hydroxytryptamine. Its function is as follows. The enzyme apparently serves as a quinone reductase in connection with conjugation reactions of hydroquinones involved in detoxification pathways as well as in biosynthetic processes such as the vitamin K-dependent gamma-carboxylation of glutamate residues in prothrombin synthesis. The sequence is that of Ribosyldihydronicotinamide dehydrogenase [quinone] (NQO2) from Homo sapiens (Human).